Reading from the N-terminus, the 694-residue chain is Elongation factor G (694 aa).

A tr-type G domain is found at 10-285 (EKTRNIGIMA…AVLDYLPSPV (276 aa)). GTP contacts are provided by residues 19–26 (AHIDAGKT), 83–87 (DTPGH), and 137–140 (NKMD).

The protein belongs to the TRAFAC class translation factor GTPase superfamily. Classic translation factor GTPase family. EF-G/EF-2 subfamily.

It localises to the cytoplasm. Catalyzes the GTP-dependent ribosomal translocation step during translation elongation. During this step, the ribosome changes from the pre-translocational (PRE) to the post-translocational (POST) state as the newly formed A-site-bound peptidyl-tRNA and P-site-bound deacylated tRNA move to the P and E sites, respectively. Catalyzes the coordinated movement of the two tRNA molecules, the mRNA and conformational changes in the ribosome. This chain is Elongation factor G, found in Limosilactobacillus fermentum (strain NBRC 3956 / LMG 18251) (Lactobacillus fermentum).